Here is a 109-residue protein sequence, read N- to C-terminus: Large ribosomal subunit protein P1 (109 aa).

Positions 71-109 (APAAASSAPAKKEEPKKEEPKKEEPKEEETDMDMGDLFG) are disordered. Over residues 80–95 (AKKEEPKKEEPKKEEP) the composition is skewed to basic and acidic residues. A run of 3 repeats spans residues 81–85 (KKEEP), 86–90 (KKEEP), and 91–95 (KKEEP). The segment at 81–95 (KKEEPKKEEPKKEEP) is 3 X 5 AA tandem repeats of K-K-E-E-P. Residues 96 to 109 (KEEETDMDMGDLFG) are compositionally biased toward acidic residues.

This sequence belongs to the eukaryotic ribosomal protein P1/P2 family. Post-translationally, not phosphorylated.

In Tetrahymena thermophila, this protein is Large ribosomal subunit protein P1 (RPLP1).